The chain runs to 391 residues: DNA replication and repair protein RecF (391 aa).

30–37 contributes to the ATP binding site; it reads GSNGQGKT.

It belongs to the RecF family.

The protein resides in the cytoplasm. Functionally, the RecF protein is involved in DNA metabolism; it is required for DNA replication and normal SOS inducibility. RecF binds preferentially to single-stranded, linear DNA. It also seems to bind ATP. This Saccharopolyspora erythraea (strain ATCC 11635 / DSM 40517 / JCM 4748 / NBRC 13426 / NCIMB 8594 / NRRL 2338) protein is DNA replication and repair protein RecF.